The sequence spans 202 residues: Small ribosomal subunit protein uS4 (202 aa).

The S4 RNA-binding domain occupies 91–168; it reads SRLSSVLYNS…QKVPDYLEVD (78 aa).

This sequence belongs to the universal ribosomal protein uS4 family. As to quaternary structure, part of the 30S ribosomal subunit. Contacts protein S5. The interaction surface between S4 and S5 is involved in control of translational fidelity.

In terms of biological role, one of the primary rRNA binding proteins, it binds directly to 16S rRNA where it nucleates assembly of the body of the 30S subunit. With S5 and S12 plays an important role in translational accuracy. This is Small ribosomal subunit protein uS4 from Ehrlichia chaffeensis (strain ATCC CRL-10679 / Arkansas).